The sequence spans 323 residues: Methionyl-tRNA formyltransferase (323 aa).

Position 118-121 (118-121 (SLLP)) interacts with (6S)-5,6,7,8-tetrahydrofolate.

This sequence belongs to the Fmt family.

The enzyme catalyses L-methionyl-tRNA(fMet) + (6R)-10-formyltetrahydrofolate = N-formyl-L-methionyl-tRNA(fMet) + (6S)-5,6,7,8-tetrahydrofolate + H(+). Functionally, attaches a formyl group to the free amino group of methionyl-tRNA(fMet). The formyl group appears to play a dual role in the initiator identity of N-formylmethionyl-tRNA by promoting its recognition by IF2 and preventing the misappropriation of this tRNA by the elongation apparatus. The protein is Methionyl-tRNA formyltransferase of Buchnera aphidicola subsp. Baizongia pistaciae (strain Bp).